Here is a 103-residue protein sequence, read N- to C-terminus: MAVQQKIRIKLKSYDHSLVDKWALRIIDVVKQTDAIIFGPIPLPTKAHIYTVNRSPHVDKKSREQFSFSSHKRLIEIINPTTRTIDMLMKLELPSGVDVEIKS.

Belongs to the universal ribosomal protein uS10 family. As to quaternary structure, part of the 30S ribosomal subunit.

In terms of biological role, involved in the binding of tRNA to the ribosomes. This is Small ribosomal subunit protein uS10 from Chlorobium limicola (strain DSM 245 / NBRC 103803 / 6330).